The sequence spans 377 residues: Succinyl-diaminopimelate desuccinylase (377 aa).

His-75 contacts Zn(2+). Asp-77 is a catalytic residue. Asp-106 provides a ligand contact to Zn(2+). Catalysis depends on Glu-136, which acts as the Proton acceptor. Zn(2+) is bound by residues Glu-137, Glu-165, and His-350.

It belongs to the peptidase M20A family. DapE subfamily. As to quaternary structure, homodimer. Zn(2+) is required as a cofactor. Requires Co(2+) as cofactor.

It catalyses the reaction N-succinyl-(2S,6S)-2,6-diaminopimelate + H2O = (2S,6S)-2,6-diaminopimelate + succinate. The protein operates within amino-acid biosynthesis; L-lysine biosynthesis via DAP pathway; LL-2,6-diaminopimelate from (S)-tetrahydrodipicolinate (succinylase route): step 3/3. Its function is as follows. Catalyzes the hydrolysis of N-succinyl-L,L-diaminopimelic acid (SDAP), forming succinate and LL-2,6-diaminopimelate (DAP), an intermediate involved in the bacterial biosynthesis of lysine and meso-diaminopimelic acid, an essential component of bacterial cell walls. The chain is Succinyl-diaminopimelate desuccinylase from Sphingopyxis alaskensis (strain DSM 13593 / LMG 18877 / RB2256) (Sphingomonas alaskensis).